The primary structure comprises 169 residues: Lipoprotein signal peptidase (169 aa).

The next 4 membrane-spanning stretches (helical) occupy residues 4 to 24 (PICS…ILDI), 29 to 49 (WVMA…FNLT), 70 to 90 (WFFA…MYRS), and 101 to 121 (YALI…HGAV). Catalysis depends on residues D123 and D141. A helical transmembrane segment spans residues 137-157 (FNLADVAICIGAALVIFEGFL).

Belongs to the peptidase A8 family.

The protein localises to the cell inner membrane. It catalyses the reaction Release of signal peptides from bacterial membrane prolipoproteins. Hydrolyzes -Xaa-Yaa-Zaa-|-(S,diacylglyceryl)Cys-, in which Xaa is hydrophobic (preferably Leu), and Yaa (Ala or Ser) and Zaa (Gly or Ala) have small, neutral side chains.. Its pathway is protein modification; lipoprotein biosynthesis (signal peptide cleavage). This protein specifically catalyzes the removal of signal peptides from prolipoproteins. The protein is Lipoprotein signal peptidase of Yersinia pestis bv. Antiqua (strain Antiqua).